We begin with the raw amino-acid sequence, 371 residues long: Glutamate 5-kinase (371 aa).

K10 serves as a coordination point for ATP. Positions 50, 137, and 149 each coordinate substrate. ATP contacts are provided by residues 169-170 and 208-214; these read SD and TGGMFTK. One can recognise a PUA domain in the interval 274-352; sequence EGRIYIDDGA…EEIRNILGED (79 aa).

This sequence belongs to the glutamate 5-kinase family.

Its subcellular location is the cytoplasm. It carries out the reaction L-glutamate + ATP = L-glutamyl 5-phosphate + ADP. It participates in amino-acid biosynthesis; L-proline biosynthesis; L-glutamate 5-semialdehyde from L-glutamate: step 1/2. In terms of biological role, catalyzes the transfer of a phosphate group to glutamate to form L-glutamate 5-phosphate. The sequence is that of Glutamate 5-kinase from Dictyoglomus turgidum (strain DSM 6724 / Z-1310).